We begin with the raw amino-acid sequence, 665 residues long: Fructose-1,6-bisphosphatase class 3 (665 aa).

This sequence belongs to the FBPase class 3 family. It depends on Mn(2+) as a cofactor.

The catalysed reaction is beta-D-fructose 1,6-bisphosphate + H2O = beta-D-fructose 6-phosphate + phosphate. Its pathway is carbohydrate biosynthesis; gluconeogenesis. This chain is Fructose-1,6-bisphosphatase class 3, found in Clostridium novyi (strain NT).